The sequence spans 618 residues: Leucine aminopeptidase 2 (618 aa).

A peptide is bound by residues 140-142 and 272-277; these read QCQ and PYGGME. His-301 lines the Zn(2+) pocket. Glu-302 serves as the catalytic Proton acceptor. Positions 305 and 324 each coordinate Zn(2+). Tyr-389 (proton donor) is an active-site residue.

It belongs to the peptidase M1 family. The cofactor is Zn(2+).

It is found in the cytoplasm. Its subcellular location is the nucleus. It catalyses the reaction an epoxide + H2O = an ethanediol. In terms of biological role, aminopeptidase that preferentially cleaves di- and tripeptides. Also has low epoxide hydrolase activity (in vitro). Can hydrolyze the epoxide leukotriene LTA(4) but it forms preferentially 5,6-dihydroxy-7,9,11,14-eicosatetraenoic acid rather than the cytokine leukotriene B(4) as the product compared to the homologous mammalian enzyme (in vitro). The protein is Leucine aminopeptidase 2 of Emericella nidulans (strain FGSC A4 / ATCC 38163 / CBS 112.46 / NRRL 194 / M139) (Aspergillus nidulans).